The sequence spans 353 residues: Thrombopoietin (353 aa).

A signal peptide spans 1–21; sequence MELTELLLVVMLLLTARLTLS. The O-linked (GalNAc...) serine glycan is linked to Ser22. Intrachain disulfides connect Cys28-Cys172 and Cys50-Cys106. Residues Thr58, Thr131, Thr179, and Thr180 are each glycosylated (O-linked (GalNAc...) threonine). Residue Ser184 is glycosylated (O-linked (GalNAc...) serine). 2 N-linked (GlcNAc...) (complex) asparagine glycosylation sites follow: Asn197 and Asn206. Thr213 carries an O-linked (GalNAc...) threonine glycan. N-linked (GlcNAc...) (complex) asparagine glycans are attached at residues Asn234 and Asn255. Residues 257–353 form a disordered region; the sequence is TRGLFPGPSR…THSQNLSQEG (97 aa). Ser265 carries an O-linked (GalNAc...) serine glycan. Polar residues predominate over residues 275-304; that stretch reads SSGTSDTGSLPPNLQPGYSPSPTHPPTGQY. Over residues 324–335 the composition is skewed to pro residues; that stretch reads LPDPSAPTPTPT. N-linked (GlcNAc...) asparagine glycans are attached at residues Asn340 and Asn348. The segment covering 343–353 has biased composition (polar residues); sequence YTHSQNLSQEG.

Belongs to the EPO/TPO family. Interacts with MPL/TPOR.

Its subcellular location is the secreted. Lineage-specific cytokine affecting the proliferation and maturation of megakaryocytes from their committed progenitor cells. It acts at a late stage of megakaryocyte development. It may be the major physiological regulator of circulating platelets. The protein is Thrombopoietin (THPO) of Homo sapiens (Human).